Consider the following 110-residue polypeptide: Small ribosomal subunit protein uS10 (110 aa).

It belongs to the universal ribosomal protein uS10 family. As to quaternary structure, part of the 30S ribosomal subunit.

Its function is as follows. Involved in the binding of tRNA to the ribosomes. This is Small ribosomal subunit protein uS10 from Coxiella burnetii (strain Dugway 5J108-111).